The following is a 404-amino-acid chain: Cysteine desulfurase IscS (404 aa).

Pyridoxal 5'-phosphate-binding positions include 75 to 76 (AT), asparagine 155, glutamine 183, and 203 to 205 (SGH). At lysine 206 the chain carries N6-(pyridoxal phosphate)lysine. Position 243 (threonine 243) interacts with pyridoxal 5'-phosphate. The Cysteine persulfide intermediate role is filled by cysteine 328. Cysteine 328 serves as a coordination point for [2Fe-2S] cluster.

This sequence belongs to the class-V pyridoxal-phosphate-dependent aminotransferase family. NifS/IscS subfamily. As to quaternary structure, homodimer. Forms a heterotetramer with IscU, interacts with other sulfur acceptors. The cofactor is pyridoxal 5'-phosphate.

It is found in the cytoplasm. It carries out the reaction (sulfur carrier)-H + L-cysteine = (sulfur carrier)-SH + L-alanine. It participates in cofactor biosynthesis; iron-sulfur cluster biosynthesis. In terms of biological role, master enzyme that delivers sulfur to a number of partners involved in Fe-S cluster assembly, tRNA modification or cofactor biosynthesis. Catalyzes the removal of elemental sulfur atoms from cysteine to produce alanine. Functions as a sulfur delivery protein for Fe-S cluster synthesis onto IscU, an Fe-S scaffold assembly protein, as well as other S acceptor proteins. This Shewanella putrefaciens (strain CN-32 / ATCC BAA-453) protein is Cysteine desulfurase IscS.